Consider the following 127-residue polypeptide: Ribonuclease VapC9 (127 aa).

In terms of domain architecture, PINc spans 2-115; it reads IVVDASAALA…VTADLRLSDT (114 aa). Residues D5 and D91 each coordinate Mg(2+).

It belongs to the PINc/VapC protein family. Requires Mg(2+) as cofactor.

Toxic component of a type II toxin-antitoxin (TA) system. An RNase. The cognate antitoxin is VapB9. This chain is Ribonuclease VapC9, found in Mycobacterium tuberculosis (strain CDC 1551 / Oshkosh).